The following is a 704-amino-acid chain: Phytyl ester synthase 1, chloroplastic (704 aa).

The N-terminal 27 residues, 1–27 (MATCSSSLLVLPNLRLSSNQRRNFKVR), are a transit peptide targeting the chloroplast.

This sequence belongs to the diacylglycerol acyltransferase family. Interacts with PGM48. Mostly expressed in flowers (e.g. sepals, petals and stamen).

Its subcellular location is the plastid. It localises to the chloroplast. It is found in the plastoglobule. The enzyme catalyses a 1,2-diacyl-3-O-(beta-D-galactosyl)-sn-glycerol + a 1,2-diacylglycerol = an acyl-3-O-(beta-D-galactosyl)-sn-glycerol + a triacylglycerol. It carries out the reaction a 1,2-diacylglycerol + a fatty acyl-CoA = a triacylglycerol + CoA. The catalysed reaction is a fatty acyl-[ACP] + a 1,2-diacylglycerol = a triacylglycerol + holo-[ACP]. It catalyses the reaction phytol + a fatty acyl-CoA = a fatty acid phytyl ester + CoA. The enzyme catalyses phytol + tetradecanoyl-CoA = tetradecanoate phytyl ester + CoA. It carries out the reaction a 1,3-diacylglycerol + a fatty acyl-CoA = a triacylglycerol + CoA. The catalysed reaction is 1,2-dihexanoylglycerol + tetradecanoyl-CoA = 1,2-dihexanoyl-3-tetradecanoylglycerol + CoA. It catalyses the reaction 1,2-dihexanoylglycerol + hexadecanoyl-CoA = 1,2-dihexanoyl-3-hexadecanoylglycerol + CoA. The enzyme catalyses 1,2-dihexanoylglycerol + octadecanoyl-CoA = 1,2-dihexanoyl-3-octadecanoylglycerol + CoA. It carries out the reaction (7Z,10Z,13Z)-hexadecatrienoyl-CoA + 1,2-dihexanoylglycerol = 1,2-dihexanoyl-3-(7Z,10Z,13Z-hexadecatrienoyl)-glycerol + CoA. The catalysed reaction is 1,2-dihexanoylglycerol + (9Z)-octadecenoyl-CoA = 1,2-dihexanoyl-3-(9Z-octadecenoyl)-glycerol + CoA. It catalyses the reaction 1,2-dihexanoylglycerol + (9Z,12Z,15Z)-octadecatrienoyl-CoA = 1,2-dihexanoyl-3-(9Z,12Z,15Z-octadecatrienoyl)-glycerol + CoA. The enzyme catalyses phytol + decanoyl-CoA = decanoate phytyl ester + CoA. It carries out the reaction (7Z,10Z,13Z)-hexadecatrienoyl-CoA + phytol = (7Z,10Z,13Z)-hexadecatrienoate phytyl ester + CoA. The catalysed reaction is phytol + dodecanoyl-CoA = dodecanoate phytyl ester + CoA. Functionally, acyltransferase involved in fatty acid phytyl ester synthesis in chloroplasts, a process required for the maintenance of the photosynthetic membrane integrity during abiotic stress and senescence. Exhibits phytyl ester synthesis and diacylglycerol acyltransferase activities with broad substrate specificities, and can employ acyl-CoAs, acyl carrier proteins, and galactolipids as acyl donors. The protein is Phytyl ester synthase 1, chloroplastic of Arabidopsis thaliana (Mouse-ear cress).